A 253-amino-acid polypeptide reads, in one-letter code: MASGSNWLSGVNVVLVMAYGSLVFVLLFIFVKRQIMRFAMKSRRGPHVPVGHNAPKDLKEEIDIRLSKVQDIKYEPQLLADDDARLLQLETQGNHNCYNYLYRMKALDAIRASEIPFHAEGRHPHSLMGKNFRSYLLDLRNTSTPFKGVRKALIDTLLDGYETARYGTGVFGLSEYLRYQEALSELATVVKARSGSSQRQHQSAAKDLTQSPEVSPTTIQVTYLPSSQKSKRAKHFLELKSFKDNYNTLESTL.

The helical transmembrane segment at 11 to 31 (VNVVLVMAYGSLVFVLLFIFV) threads the bilayer. The interval 194 to 213 (SGSSQRQHQSAAKDLTQSPE) is disordered.

It localises to the membrane. It is found in the golgi apparatus. The protein localises to the mitochondrion. Its function is as follows. General regulator of phagocytosis. Required to uptake Gram negative bacterium by macrophages. The sequence is that of Protein C1orf43 homolog from Bos taurus (Bovine).